We begin with the raw amino-acid sequence, 166 residues long: MSAAAGDEIKRVRVDMFTDGACSGNPGPGGWGTILRWGDTEKELWGGETPTTNNRMELMAVIRGLEALRRPVTVTIHTDSRYVHDGITGWIHGWKRNGWKTAAKKPVKNEDLWRRLDAALGTHDISWQWVRGHSGHVENERADELARRGTSEARQGKVDGQSSTIL.

The RNase H type-1 domain maps to 10 to 151 (KRVRVDMFTD…ADELARRGTS (142 aa)). Mg(2+)-binding residues include Asp-19, Glu-57, Asp-79, and Asp-143. The segment covering 145–157 (LARRGTSEARQGK) has biased composition (basic and acidic residues). A disordered region spans residues 145-166 (LARRGTSEARQGKVDGQSSTIL).

Belongs to the RNase H family. As to quaternary structure, monomer. Requires Mg(2+) as cofactor.

It localises to the cytoplasm. The catalysed reaction is Endonucleolytic cleavage to 5'-phosphomonoester.. Functionally, endonuclease that specifically degrades the RNA of RNA-DNA hybrids. The sequence is that of Ribonuclease H from Rhodospirillum rubrum (strain ATCC 11170 / ATH 1.1.1 / DSM 467 / LMG 4362 / NCIMB 8255 / S1).